Reading from the N-terminus, the 294-residue chain is Probable porphobilinogen deaminase (294 aa).

At cysteine 233 the chain carries S-(dipyrrolylmethanemethyl)cysteine.

Belongs to the HMBS family. It depends on dipyrromethane as a cofactor.

It carries out the reaction 4 porphobilinogen + H2O = hydroxymethylbilane + 4 NH4(+). Its pathway is porphyrin-containing compound metabolism; protoporphyrin-IX biosynthesis; coproporphyrinogen-III from 5-aminolevulinate: step 2/4. In terms of biological role, tetrapolymerization of the monopyrrole PBG into the hydroxymethylbilane pre-uroporphyrinogen in several discrete steps. The protein is Probable porphobilinogen deaminase of Sulfurisphaera tokodaii (strain DSM 16993 / JCM 10545 / NBRC 100140 / 7) (Sulfolobus tokodaii).